We begin with the raw amino-acid sequence, 68 residues long: DNA-directed RNA polymerase subunit omega (68 aa).

The protein belongs to the RNA polymerase subunit omega family. In terms of assembly, the RNAP catalytic core consists of 2 alpha, 1 beta, 1 beta' and 1 omega subunit. When a sigma factor is associated with the core the holoenzyme is formed, which can initiate transcription.

It catalyses the reaction RNA(n) + a ribonucleoside 5'-triphosphate = RNA(n+1) + diphosphate. Promotes RNA polymerase assembly. Latches the N- and C-terminal regions of the beta' subunit thereby facilitating its interaction with the beta and alpha subunits. The chain is DNA-directed RNA polymerase subunit omega from Ruminiclostridium cellulolyticum (strain ATCC 35319 / DSM 5812 / JCM 6584 / H10) (Clostridium cellulolyticum).